Reading from the N-terminus, the 999-residue chain is Embryonic polarity protein dorsal (999 aa).

The disordered stretch occupies residues Met-1–Arg-44. One can recognise an RHD domain in the interval Pro-47–Lys-342. A Phosphoserine; by PKA modification is found at Ser-312. 2 disordered regions span residues Phe-389–Thr-424 and Gln-670–Gly-851. The span at Glu-402–Thr-424 shows a compositional bias: low complexity. Positions Asn-668–Pro-677 match the Nuclear export signal motif. The span at Pro-677–Pro-686 shows a compositional bias: pro residues. Basic and acidic residues predominate over residues Lys-710–Ser-719. Polar residues predominate over residues Ile-720–Ser-734. Positions Lys-756 to Asp-773 match the Nuclear localization signal motif. Low complexity-rich tracts occupy residues Ser-819–Val-829 and Ser-836–Gly-851.

As to quaternary structure, interacts with tamo via the nuclear localization signal. Interacts with emb, a component of the nuclear export complex. As to expression, in unchallenged larvae, expression of both isoforms is seen in fat body and gut (isoform A is more abundant). After immune challenge levels of both isoforms are enhanced.

The protein localises to the cytoplasm. Its subcellular location is the nucleus. Its function is as follows. Embryonic developmental transcription factor. The lateral or ventral identity of a cell depends upon the concentration of this protein in its nucleus during the blastoderm stage. Acts as a morphogenetic transcription factor that specifically binds to the kappa-B-related consensus sequence 5'-GRGAAAANCC-3', located in the enhancer region of zygotic genes such as Zen, Twist, Snail and Decapentaplegic, promoting their expression. Part of a signaling pathway involving NF-kappa-B and Toll-related receptors, that functions in the apoptosis of unfit cells during cell competition. Mediates an immune response in larvae. May be part of a NF-kappa-B and Tollo signaling cascade that regulates development of the peripheral nervous system. The protein is Embryonic polarity protein dorsal (dl) of Drosophila melanogaster (Fruit fly).